Here is a 217-residue protein sequence, read N- to C-terminus: MRLKTWIVAFFLGLFGTTVNADTTHKTDVSVTLSTAQGVQVLFVNGVSTDELSTPYTLIDGSNQVVIKVNKAIGRGDKRTQVYSAPYILGFSSGAGELYIDAPSFRDKRQADKLFEKDTMDWKVSINDKSIDYSQYKMPGKKGAFPYSNLDEQLAEYNELNGVYFSNGKRVELSELQATGTAKETHRVNSPLTKAKIAYLEMTDEERQLFMKWVSQQ.

The N-terminal stretch at 1-21 is a signal peptide; the sequence is MRLKTWIVAFFLGLFGTTVNA.

It belongs to the UPF0319 family.

The protein is UPF0319 protein VP1009 of Vibrio parahaemolyticus serotype O3:K6 (strain RIMD 2210633).